Here is a 205-residue protein sequence, read N- to C-terminus: Ribosomal RNA small subunit methyltransferase G (205 aa).

S-adenosyl-L-methionine contacts are provided by residues Gly-71, Phe-76, 120-121, and Arg-134; that span reads IE.

The protein belongs to the methyltransferase superfamily. RNA methyltransferase RsmG family.

It is found in the cytoplasm. It catalyses the reaction guanosine(527) in 16S rRNA + S-adenosyl-L-methionine = N(7)-methylguanosine(527) in 16S rRNA + S-adenosyl-L-homocysteine. In terms of biological role, specifically methylates the N7 position of guanine in position 527 of 16S rRNA. The polypeptide is Ribosomal RNA small subunit methyltransferase G (Paramagnetospirillum magneticum (strain ATCC 700264 / AMB-1) (Magnetospirillum magneticum)).